The following is a 501-amino-acid chain: CaM kinase-like vesicle-associated protein (501 aa).

A Protein kinase domain is found at 24–286; the sequence is YDLGQVIKTE…AEEAISHEWI (263 aa). Residues 327–501 are disordered; the sequence is RAPEQSSTAA…AQESQREEAS (175 aa). The segment covering 331 to 365 has biased composition (low complexity); sequence QSSTAAAQSASATDTATPGAAGGATAAAASGATSA. Polar residues predominate over residues 387-428; sequence TPATDGSATPATDGSVTPATDGSITPATDGSVTPATDRSATP. T435 is modified (phosphothreonine). A compositionally biased stretch (polar residues) spans 438–451; it reads TEESTVPTTQSSAM. Position 459 is a phosphothreonine (T459).

This sequence belongs to the protein kinase superfamily. CAMK Ser/Thr protein kinase family. Interacts with calmodulin, in the presence of calcium. Requires Ca(2+) as cofactor.

The protein resides in the cell membrane. Its subcellular location is the cytoplasmic vesicle membrane. Its function is as follows. Does not appear to have detectable kinase activity. This is CaM kinase-like vesicle-associated protein (CAMKV) from Homo sapiens (Human).